Reading from the N-terminus, the 326-residue chain is UDP-3-O-acylglucosamine N-acyltransferase (326 aa).

The active-site Proton acceptor is His-225.

The protein belongs to the transferase hexapeptide repeat family. LpxD subfamily. As to quaternary structure, homotrimer.

It carries out the reaction a UDP-3-O-[(3R)-3-hydroxyacyl]-alpha-D-glucosamine + a (3R)-hydroxyacyl-[ACP] = a UDP-2-N,3-O-bis[(3R)-3-hydroxyacyl]-alpha-D-glucosamine + holo-[ACP] + H(+). The protein operates within bacterial outer membrane biogenesis; LPS lipid A biosynthesis. Catalyzes the N-acylation of UDP-3-O-acylglucosamine using 3-hydroxyacyl-ACP as the acyl donor. Is involved in the biosynthesis of lipid A, a phosphorylated glycolipid that anchors the lipopolysaccharide to the outer membrane of the cell. The chain is UDP-3-O-acylglucosamine N-acyltransferase from Verminephrobacter eiseniae (strain EF01-2).